Reading from the N-terminus, the 434-residue chain is Enolase (434 aa).

Gln-166 is a (2R)-2-phosphoglycerate binding site. Catalysis depends on Glu-208, which acts as the Proton donor. Mg(2+)-binding residues include Asp-245, Glu-290, and Asp-317. Positions 342, 371, 372, and 393 each coordinate (2R)-2-phosphoglycerate. Lys-342 acts as the Proton acceptor in catalysis.

The protein belongs to the enolase family. The cofactor is Mg(2+).

The protein localises to the cytoplasm. It localises to the secreted. It is found in the cell surface. The enzyme catalyses (2R)-2-phosphoglycerate = phosphoenolpyruvate + H2O. It functions in the pathway carbohydrate degradation; glycolysis; pyruvate from D-glyceraldehyde 3-phosphate: step 4/5. Functionally, catalyzes the reversible conversion of 2-phosphoglycerate (2-PG) into phosphoenolpyruvate (PEP). It is essential for the degradation of carbohydrates via glycolysis. This Caldicellulosiruptor saccharolyticus (strain ATCC 43494 / DSM 8903 / Tp8T 6331) protein is Enolase.